The following is a 203-amino-acid chain: Ras-like protein family member 10B (203 aa).

The tract at residues 1-203 (MVSTYRVAVL…ALRRNRCAIM (203 aa)) is small GTPase-like. Residue 11 to 18 (GARGVGKS) participates in GTP binding. The Effector region motif lies at 33–42 (CVPTTARRLY). Residues 59–62 (DFPP) and 128–131 (NKRD) each bind GTP. Cys-200 carries the cysteine methyl ester modification. Residue Cys-200 is the site of S-geranylgeranyl cysteine attachment. Residues 201–203 (AIM) constitute a propeptide, removed in mature form.

Belongs to the small GTPase superfamily. Ras family. In terms of assembly, interacts with CADPS. In terms of tissue distribution, expressed at high levels in skeletal muscle and, at much lower levels, in heart, brain and pancreas.

It localises to the cell membrane. It carries out the reaction GTP + H2O = GDP + phosphate + H(+). Its function is as follows. May facilitate the release of atrial natriuretic peptide by cardiomyocytes and hence play a role in the regulation of arterial pressure. The polypeptide is Ras-like protein family member 10B (RASL10B) (Homo sapiens (Human)).